Here is a 451-residue protein sequence, read N- to C-terminus: Glutamyl-tRNA(Gln) amidotransferase subunit D (451 aa).

A disordered region spans residues 78-97; the sequence is PREAPTPGEEEGSQEDFGQP. The 334-residue stretch at 99–432 folds into the Asparaginase/glutaminase domain; that stretch reads PRVFFVGTGG…EEIQRLFTAN (334 aa). Catalysis depends on residues Thr-109, Thr-187, Asp-188, and Lys-266.

Belongs to the asparaginase 1 family. GatD subfamily. Heterodimer of GatD and GatE.

The catalysed reaction is L-glutamyl-tRNA(Gln) + L-glutamine + ATP + H2O = L-glutaminyl-tRNA(Gln) + L-glutamate + ADP + phosphate + H(+). Functionally, allows the formation of correctly charged Gln-tRNA(Gln) through the transamidation of misacylated Glu-tRNA(Gln) in organisms which lack glutaminyl-tRNA synthetase. The reaction takes place in the presence of glutamine and ATP through an activated gamma-phospho-Glu-tRNA(Gln). The GatDE system is specific for glutamate and does not act on aspartate. This is Glutamyl-tRNA(Gln) amidotransferase subunit D from Thermofilum pendens (strain DSM 2475 / Hrk 5).